We begin with the raw amino-acid sequence, 147 residues long: Large ribosomal subunit protein bL9 (147 aa).

The protein belongs to the bacterial ribosomal protein bL9 family.

In terms of biological role, binds to the 23S rRNA. The sequence is that of Large ribosomal subunit protein bL9 from Mycoplasma capricolum subsp. capricolum (strain California kid / ATCC 27343 / NCTC 10154).